A 265-amino-acid polypeptide reads, in one-letter code: Phosphate import ATP-binding protein PstB (265 aa).

One can recognise an ABC transporter domain in the interval 18–260 (ISARDVQVFY…PEDPRTESYI (243 aa)). 50 to 57 (GPSGCGKS) contributes to the ATP binding site.

The protein belongs to the ABC transporter superfamily. Phosphate importer (TC 3.A.1.7) family. In terms of assembly, the complex is composed of two ATP-binding proteins (PstB), two transmembrane proteins (PstC and PstA) and a solute-binding protein (PstS).

It is found in the cell inner membrane. The catalysed reaction is phosphate(out) + ATP + H2O = ADP + 2 phosphate(in) + H(+). Part of the ABC transporter complex PstSACB involved in phosphate import. Responsible for energy coupling to the transport system. The chain is Phosphate import ATP-binding protein PstB from Roseobacter denitrificans (strain ATCC 33942 / OCh 114) (Erythrobacter sp. (strain OCh 114)).